We begin with the raw amino-acid sequence, 90 residues long: Small ribosomal subunit protein bS16 (90 aa).

It belongs to the bacterial ribosomal protein bS16 family.

In Streptococcus pyogenes serotype M4 (strain MGAS10750), this protein is Small ribosomal subunit protein bS16.